A 426-amino-acid chain; its full sequence is SrfA-induced gene K protein (426 aa).

The first 23 residues, 1–23 (MKKMKILSFFILSLAIIIGIVYS), serve as a signal peptide directing secretion. Residues N64, N136, N160, and N226 are each glycosylated (N-linked (GlcNAc...) asparagine). Laminin EGF-like domains are found at residues 325 to 348 (DNQC…GMVL) and 384 to 408 (CNGT…GGEV). Disulfide bonds link C330/C339, C342/C358, and C370/C388. N385 is a glycosylation site (N-linked (GlcNAc...) asparagine).

The polypeptide is SrfA-induced gene K protein (sigK) (Dictyostelium discoideum (Social amoeba)).